Reading from the N-terminus, the 647-residue chain is MSDLYTIDPMLAKDAHVDRAHYKTLYHESLEQPEAFWSNIAQRLEWFKTPTKIKDVSYQLEDVHIRWFEDGELNASVNCLDRHLTLRGDKTALLFEPDAPDAPSSRITYRELYERVCQLGNALRHLNIEKGDRVTIYLPMIPDAVVAILACARIGAIHSVVFGGFAPNSIADRINDCGSKLIITADEGLRGGRKIPLKANVDAALKIHGTQSVETVLVVRHTGGTINMHTPRDRWFHHVVDIQATECAPERMNAEDPLFILYTSGSTGKPKGVLHTTGGYLVYTSYTHETVFDLRENDIYWCTADIGWITGHSYIVYGPLANGATVLLFEGVPHYPTVSRFWEVIDKHHVTLFYTAPTAIRALMREGDTPVKKTSRKSLRLLGSVGEPINPEAWHWYYTIVGNGRCPIVDTWWQTETGGILITPLIGATDLKPGSVTLPFFGIRPALVDTNGQILDGPAAGNLVLLDSWPGQMRTVYGDHQRFIDTYFRTYPNTYFTGDGCRRDADGYYWITGRVDDVINISGHRIGTAEIESTLVAHPKVAEAAVVGFPHPIKGQGIYAYVTLITGETPSEALHQELLTWVRKEIGAIATPDHVQWAPNLPKTRSGKIMRRILRKIAENAPDQLGDTSTLADPSIVDLLLNERLTH.

CoA-binding positions include 190–193 (RGGR) and threonine 310. ATP is bound by residues 386–388 (GEP), 410–415 (DTWWQT), aspartate 499, and arginine 514. Serine 522 is a CoA binding site. Position 525 (arginine 525) interacts with ATP. Mg(2+) is bound by residues valine 536, histidine 538, and valine 541. Arginine 583 provides a ligand contact to CoA. N6-acetyllysine is present on lysine 608.

The protein belongs to the ATP-dependent AMP-binding enzyme family. Requires Mg(2+) as cofactor. Post-translationally, acetylated. Deacetylation by the SIR2-homolog deacetylase activates the enzyme.

It catalyses the reaction acetate + ATP + CoA = acetyl-CoA + AMP + diphosphate. In terms of biological role, catalyzes the conversion of acetate into acetyl-CoA (AcCoA), an essential intermediate at the junction of anabolic and catabolic pathways. AcsA undergoes a two-step reaction. In the first half reaction, AcsA combines acetate with ATP to form acetyl-adenylate (AcAMP) intermediate. In the second half reaction, it can then transfer the acetyl group from AcAMP to the sulfhydryl group of CoA, forming the product AcCoA. The sequence is that of Acetyl-coenzyme A synthetase from Xylella fastidiosa (strain 9a5c).